The primary structure comprises 222 residues: MILTINEVLTSSELNKLLDGLSRAPFVDGKTTAGWHAKLVKNTVQLDKNSQEWKKAENIVKTALDRNMLLKMAVLPKRIHSLLFSRYETGMSYGSHVDNGFMGGQEFWRSDVSFTLFLTSPDSYKGGELVIEMTEGERIYKLEAGSMIVYPSSFLHRVETVTDGVRLVVVGWIESLVRDPSEREFLFDLDTVRRSIFTKEGKSLEFDILSKTYANLLRKWGK.

The Fe2OG dioxygenase domain occupies R78–S175. Fe cation is bound by residues H96, D98, and H156. R166 provides a ligand contact to 2-oxoglutarate.

Requires Fe(2+) as cofactor. It depends on L-ascorbate as a cofactor.

The protein is PKHD-type hydroxylase PCC8801_2196 of Rippkaea orientalis (strain PCC 8801 / RF-1) (Cyanothece sp. (strain PCC 8801)).